The primary structure comprises 179 residues: Large ribosomal subunit protein uL5 (179 aa).

This sequence belongs to the universal ribosomal protein uL5 family. In terms of assembly, part of the 50S ribosomal subunit; part of the 5S rRNA/L5/L18/L25 subcomplex. Contacts the 5S rRNA and the P site tRNA. Forms a bridge to the 30S subunit in the 70S ribosome.

In terms of biological role, this is one of the proteins that bind and probably mediate the attachment of the 5S RNA into the large ribosomal subunit, where it forms part of the central protuberance. In the 70S ribosome it contacts protein S13 of the 30S subunit (bridge B1b), connecting the 2 subunits; this bridge is implicated in subunit movement. Contacts the P site tRNA; the 5S rRNA and some of its associated proteins might help stabilize positioning of ribosome-bound tRNAs. The polypeptide is Large ribosomal subunit protein uL5 (Shewanella putrefaciens (strain CN-32 / ATCC BAA-453)).